The chain runs to 337 residues: tRNA N6-adenosine threonylcarbamoyltransferase (337 aa).

Fe cation is bound by residues H110 and H114. Substrate-binding positions include 133-137, D166, G179, D183, and N276; that span reads MVSGG. A Fe cation-binding site is contributed by D302.

This sequence belongs to the KAE1 / TsaD family. Fe(2+) serves as cofactor.

The protein resides in the cytoplasm. It catalyses the reaction L-threonylcarbamoyladenylate + adenosine(37) in tRNA = N(6)-L-threonylcarbamoyladenosine(37) in tRNA + AMP + H(+). Required for the formation of a threonylcarbamoyl group on adenosine at position 37 (t(6)A37) in tRNAs that read codons beginning with adenine. Is involved in the transfer of the threonylcarbamoyl moiety of threonylcarbamoyl-AMP (TC-AMP) to the N6 group of A37, together with TsaE and TsaB. TsaD likely plays a direct catalytic role in this reaction. The chain is tRNA N6-adenosine threonylcarbamoyltransferase from Fervidobacterium nodosum (strain ATCC 35602 / DSM 5306 / Rt17-B1).